A 205-amino-acid polypeptide reads, in one-letter code: Histidine biosynthesis bifunctional protein HisIE (205 aa).

A phosphoribosyl-AMP cyclohydrolase region spans residues 1–115 (MIDIKELKFD…DEETEDGIEI (115 aa)). Positions 116-205 (LNKLYERIKG…YNELERRYKK (90 aa)) are phosphoribosyl-ATP pyrophosphohydrolase.

In the N-terminal section; belongs to the PRA-CH family. The protein in the C-terminal section; belongs to the PRA-PH family.

It localises to the cytoplasm. The catalysed reaction is 1-(5-phospho-beta-D-ribosyl)-ATP + H2O = 1-(5-phospho-beta-D-ribosyl)-5'-AMP + diphosphate + H(+). It catalyses the reaction 1-(5-phospho-beta-D-ribosyl)-5'-AMP + H2O = 1-(5-phospho-beta-D-ribosyl)-5-[(5-phospho-beta-D-ribosylamino)methylideneamino]imidazole-4-carboxamide. It functions in the pathway amino-acid biosynthesis; L-histidine biosynthesis; L-histidine from 5-phospho-alpha-D-ribose 1-diphosphate: step 2/9. Its pathway is amino-acid biosynthesis; L-histidine biosynthesis; L-histidine from 5-phospho-alpha-D-ribose 1-diphosphate: step 3/9. The chain is Histidine biosynthesis bifunctional protein HisIE from Caldanaerobacter subterraneus subsp. tengcongensis (strain DSM 15242 / JCM 11007 / NBRC 100824 / MB4) (Thermoanaerobacter tengcongensis).